Reading from the N-terminus, the 320-residue chain is Phospho-N-acetylmuramoyl-pentapeptide-transferase (320 aa).

The next 10 helical transmembrane spans lie at 7–27 (ILAI…VIPF), 50–70 (GTPT…SLIF), 77–97 (IGAP…DDFI), 113–133 (LVLQ…HLGS), 148–168 (WAYV…VNLT), 173–193 (GLAS…SIFS), 198–216 (MAIF…LRYN), 221–241 (VVFM…AIAV), 247–267 (VLVL…MLQV), and 297–317 (VVVV…AMIQ).

Belongs to the glycosyltransferase 4 family. MraY subfamily. The cofactor is Mg(2+).

The protein resides in the cell membrane. The catalysed reaction is UDP-N-acetyl-alpha-D-muramoyl-L-alanyl-gamma-D-glutamyl-meso-2,6-diaminopimeloyl-D-alanyl-D-alanine + di-trans,octa-cis-undecaprenyl phosphate = di-trans,octa-cis-undecaprenyl diphospho-N-acetyl-alpha-D-muramoyl-L-alanyl-D-glutamyl-meso-2,6-diaminopimeloyl-D-alanyl-D-alanine + UMP. It participates in cell wall biogenesis; peptidoglycan biosynthesis. Its function is as follows. Catalyzes the initial step of the lipid cycle reactions in the biosynthesis of the cell wall peptidoglycan: transfers peptidoglycan precursor phospho-MurNAc-pentapeptide from UDP-MurNAc-pentapeptide onto the lipid carrier undecaprenyl phosphate, yielding undecaprenyl-pyrophosphoryl-MurNAc-pentapeptide, known as lipid I. The chain is Phospho-N-acetylmuramoyl-pentapeptide-transferase from Caldicellulosiruptor bescii (strain ATCC BAA-1888 / DSM 6725 / KCTC 15123 / Z-1320) (Anaerocellum thermophilum).